A 198-amino-acid polypeptide reads, in one-letter code: Large ribosomal subunit protein eL19 (198 aa).

Disordered regions lie at residues 66-85 (YEEA…RGTA) and 150-177 (KRAK…EERQ). A compositionally biased stretch (basic residues) spans 71–83 (RKGRHTGYGKRRG). Basic and acidic residues predominate over residues 160 to 177 (QARRDKNKESRKRREERQ).

This sequence belongs to the eukaryotic ribosomal protein eL19 family.

The polypeptide is Large ribosomal subunit protein eL19 (rpl-19) (Caenorhabditis elegans).